Consider the following 401-residue polypeptide: Argininosuccinate synthase (401 aa).

8 to 16 contacts ATP; it reads AYSGGLDTS. Residue Tyr-85 coordinates L-citrulline. Gly-115 contributes to the ATP binding site. 3 residues coordinate L-aspartate: Thr-117, Asn-121, and Asp-122. Asn-121 serves as a coordination point for L-citrulline. L-citrulline contacts are provided by Arg-125, Ser-173, Glu-258, and Tyr-270.

It belongs to the argininosuccinate synthase family. Type 1 subfamily. Homotetramer.

The protein resides in the cytoplasm. It catalyses the reaction L-citrulline + L-aspartate + ATP = 2-(N(omega)-L-arginino)succinate + AMP + diphosphate + H(+). It participates in amino-acid biosynthesis; L-arginine biosynthesis; L-arginine from L-ornithine and carbamoyl phosphate: step 2/3. The sequence is that of Argininosuccinate synthase from Staphylococcus aureus (strain bovine RF122 / ET3-1).